We begin with the raw amino-acid sequence, 173 residues long: Dual-action ribosomal maturation protein DarP (173 aa).

It belongs to the DarP family.

Its subcellular location is the cytoplasm. Functionally, member of a network of 50S ribosomal subunit biogenesis factors which assembles along the 30S-50S interface, preventing incorrect 23S rRNA structures from forming. Promotes peptidyl transferase center (PTC) maturation. This chain is Dual-action ribosomal maturation protein DarP, found in Pseudomonas putida (strain ATCC 700007 / DSM 6899 / JCM 31910 / BCRC 17059 / LMG 24140 / F1).